Here is a 78-residue protein sequence, read N- to C-terminus: COP9 signalosome complex subunit 5b (78 aa).

The protein belongs to the peptidase M67A family. CSN5 subfamily. Component of the CSN complex, probably composed of CSN1, CSN2, CSN3, CSN4, CSN5 (CSN5A or CSN5B), CSN6 (CSN6A or CSN6B), CSN7 and CSN8. It depends on a divalent metal cation as a cofactor.

It localises to the cytoplasm. The protein localises to the nucleus. Probable protease subunit of the COP9 signalosome complex (CSN), a complex involved in various cellular and developmental processes such as photomorphogenesis and auxin and jasmonate responses. The CSN complex is an essential regulator of the ubiquitin (Ubl) conjugation pathway by mediating the deneddylation of the cullin subunits of the SCF-type E3 ligase complexes, leading to decrease the Ubl ligase activity of SCF. In the complex, it probably acts as the catalytic center that mediates the cleavage of Nedd8 from cullins. It however has no metalloprotease activity by itself and requires the other subunits of the CSN complex. The CSN complex is involved in repression of photomorphogenesis in darkness by regulating the activity of COP1-containing Ubl ligase complexes. The polypeptide is COP9 signalosome complex subunit 5b (CSN5B) (Brassica oleracea (Wild cabbage)).